A 193-amino-acid polypeptide reads, in one-letter code: 7-methyl-GTP pyrophosphatase (193 aa).

The active-site Proton acceptor is Asp70.

It belongs to the Maf family. YceF subfamily. The cofactor is a divalent metal cation.

It is found in the cytoplasm. It carries out the reaction N(7)-methyl-GTP + H2O = N(7)-methyl-GMP + diphosphate + H(+). Its function is as follows. Nucleoside triphosphate pyrophosphatase that hydrolyzes 7-methyl-GTP (m(7)GTP). May have a dual role in cell division arrest and in preventing the incorporation of modified nucleotides into cellular nucleic acids. This chain is 7-methyl-GTP pyrophosphatase, found in Aliivibrio fischeri (strain ATCC 700601 / ES114) (Vibrio fischeri).